Consider the following 652-residue polypeptide: ATP-dependent zinc metalloprotease FtsH 1 (652 aa).

The Cytoplasmic portion of the chain corresponds to 1–9; that stretch reads MSDNKWLRN. A helical membrane pass occupies residues 10-30; sequence GFVWMILIIAAIAVWVTFVQG. Residues 31–110 are Extracellular-facing; it reads GRGGATITTQ…QTHRASQWGN (80 aa). The chain crosses the membrane as a helical span at residues 111-131; that stretch reads VLGTLTFLLPTLFLIGVIIFM. Residues 132–652 lie on the Cytoplasmic side of the membrane; the sequence is MRQAQGTNNQ…VPHIKPQPAS (521 aa). 203–210 is a binding site for ATP; it reads GPPGTGKT. His-425 serves as a coordination point for Zn(2+). The active site involves Glu-426. Zn(2+) is bound by residues His-429 and Asp-501. A disordered region spans residues 623–652; sequence IATPETARPDSPSEARPAAPVPHIKPQPAS. The segment covering 641 to 652 has biased composition (pro residues); the sequence is APVPHIKPQPAS.

This sequence in the central section; belongs to the AAA ATPase family. The protein in the C-terminal section; belongs to the peptidase M41 family. In terms of assembly, homohexamer. It depends on Zn(2+) as a cofactor.

Its subcellular location is the cell membrane. Acts as a processive, ATP-dependent zinc metallopeptidase for both cytoplasmic and membrane proteins. Plays a role in the quality control of integral membrane proteins. The sequence is that of ATP-dependent zinc metalloprotease FtsH 1 from Thermomicrobium roseum (strain ATCC 27502 / DSM 5159 / P-2).